Here is a 608-residue protein sequence, read N- to C-terminus: DNA ligase (608 aa).

An ATP-binding site is contributed by Glu-266. Lys-268 functions as the N6-AMP-lysine intermediate in the catalytic mechanism. The ATP site is built by Arg-273, Arg-288, Glu-318, Phe-358, Arg-435, and Lys-441.

Belongs to the ATP-dependent DNA ligase family. Mg(2+) serves as cofactor. Mn(2+) is required as a cofactor.

The enzyme catalyses ATP + (deoxyribonucleotide)n-3'-hydroxyl + 5'-phospho-(deoxyribonucleotide)m = (deoxyribonucleotide)n+m + AMP + diphosphate.. The catalysed reaction is ADP + (deoxyribonucleotide)n-3'-hydroxyl + 5'-phospho-(deoxyribonucleotide)m = (deoxyribonucleotide)n+m + AMP + phosphate.. It carries out the reaction GTP + (deoxyribonucleotide)n-3'-hydroxyl + 5'-phospho-(deoxyribonucleotide)m = (deoxyribonucleotide)n+m + GMP + diphosphate.. In terms of biological role, DNA ligase that seals nicks in double-stranded DNA during DNA replication, DNA recombination and DNA repair. Can use ATP, ADP and GTP, but not CTP, TTP or NAD(+). This is DNA ligase from Hyperthermus butylicus (strain DSM 5456 / JCM 9403 / PLM1-5).